A 313-amino-acid polypeptide reads, in one-letter code: Ankyrin repeat family A protein 2 (313 aa).

ANK repeat units lie at residues 148–180, 181–213, 214–246, 247–279, and 280–313; these read ANSL…HTDE, EGFT…LLGK, GRES…EYDW, NGGT…IETD, and SGYN…NIKE.

Interacts (via ANK repeats) with CCDC8 (via PxLPxI/L motif); mediates the interaction with the 3M complex which is composed of CCDC8, CUL7 and OBSL1. Interacts (via ANK repeats) with HDAC4 (via PxLPxI/L motif). Interacts (via ANK repeats) with HDAC5 (via PxLPxI/L motif). Interacts (via ANK repeats) with LRP2/megalin (via PxLPxI/L motif). Interacts (via ANK repeats) with RFX7 (via PxLPxI/L motif). Interacts with AHRR. Interacts with NEK6.

It localises to the cytoplasm. Its subcellular location is the cytoskeleton. The protein localises to the membrane. In terms of biological role, may regulate the interaction between the 3M complex and the histone deacetylases HDAC4 and HDAC5. May also regulate LRP2/megalin. This chain is Ankyrin repeat family A protein 2 (ANKRA2), found in Homo sapiens (Human).